The chain runs to 369 residues: GTPase Obg (369 aa).

One can recognise an Obg domain in the interval 1-159 (MKFIDEAKIE…RELRLELKVL (159 aa)). A disordered region spans residues 128–148 (IHFKSSTNRAPRQKSEGKEGE). One can recognise an OBG-type G domain in the interval 160-333 (ADIGLLGMPN…LVTEIYDYIA (174 aa)). Residues 166-173 (GMPNAGKS), 191-195 (FTTLH), 213-216 (DIPG), 283-286 (NKLD), and 314-316 (SAL) contribute to the GTP site. Positions 173 and 193 each coordinate Mg(2+).

The protein belongs to the TRAFAC class OBG-HflX-like GTPase superfamily. OBG GTPase family. In terms of assembly, monomer. Mg(2+) is required as a cofactor.

It is found in the cytoplasm. Functionally, an essential GTPase which binds GTP, GDP and possibly (p)ppGpp with moderate affinity, with high nucleotide exchange rates and a fairly low GTP hydrolysis rate. Plays a role in control of the cell cycle, stress response, ribosome biogenesis and in those bacteria that undergo differentiation, in morphogenesis control. The sequence is that of GTPase Obg from Herminiimonas arsenicoxydans.